The sequence spans 279 residues: Energy-coupling factor transporter ATP-binding protein EcfA2 (279 aa).

An ABC transporter domain is found at 3-245; that stretch reads ITLKNVSYTY…LDFMESIQLG (243 aa). 40-47 lines the ATP pocket; that stretch reads GHTGSGKS.

Belongs to the ABC transporter superfamily. Energy-coupling factor EcfA family. As to quaternary structure, forms a stable energy-coupling factor (ECF) transporter complex composed of 2 membrane-embedded substrate-binding proteins (S component), 2 ATP-binding proteins (A component) and 2 transmembrane proteins (T component).

The protein localises to the cell membrane. Its function is as follows. ATP-binding (A) component of a common energy-coupling factor (ECF) ABC-transporter complex. Unlike classic ABC transporters this ECF transporter provides the energy necessary to transport a number of different substrates. The chain is Energy-coupling factor transporter ATP-binding protein EcfA2 from Streptococcus sanguinis (strain SK36).